Consider the following 184-residue polypeptide: Large ribosomal subunit protein uL18 (184 aa).

Belongs to the universal ribosomal protein uL18 family. Part of the 50S ribosomal subunit. Contacts the 5S and 23S rRNAs.

In terms of biological role, this is one of the proteins that bind and probably mediate the attachment of the 5S RNA into the large ribosomal subunit, where it forms part of the central protuberance. This is Large ribosomal subunit protein uL18 from Natronomonas pharaonis (strain ATCC 35678 / DSM 2160 / CIP 103997 / JCM 8858 / NBRC 14720 / NCIMB 2260 / Gabara) (Halobacterium pharaonis).